The following is a 425-amino-acid chain: MKPVKKKKTEEPELEPLCCCEYIDRNGEKNHVAACLCDCQDLDEGCDRWLTCQSLRPETCERITDTISDRLRIPWLRGAKKVNISIVPPLVLLPVFLHVASWHFLLGVVVLTSLPMLALWYYYLTHRRKEQTLFFLSLGLFSLGYMYYVFLREVVPQGRVGPTQLALLTCGLLLILLALYRAKKNPGYLSNDKSPSNSQIECPVKKGQEKTKGFPGTDASGSLNNRTLKDDVRGSSRVGLDSPAKVKEDWCAKCQLVRPARAWHCRICGICVRRMDHHCVWINSCVGESNHQAFILALSIFLLTSVYGISLTLNTICRDRSLFTALFYCPGVYANYSSALSFTCVWYSVIITAGMAYIFLIQLINISYNVTEREVQQALRQKTGRRLLCGLIVDTGQYNRGFLRNWLQFSTLGTHTVHTPAEDIV.

Topologically, residues 1–81 (MKPVKKKKTE…RIPWLRGAKK (81 aa)) are cytoplasmic. Residues 82–99 (VNISIVPPLVLLPVFLHV) traverse the membrane as a helical segment. The Lumenal portion of the chain corresponds to 100 to 102 (ASW). Residues 103–125 (HFLLGVVVLTSLPMLALWYYYLT) form a helical membrane-spanning segment. Over 126 to 130 (HRRKE) the chain is Cytoplasmic. A helical membrane pass occupies residues 131–151 (QTLFFLSLGLFSLGYMYYVFL). The Lumenal portion of the chain corresponds to 152-159 (REVVPQGR). A helical membrane pass occupies residues 160 to 180 (VGPTQLALLTCGLLLILLALY). The Cytoplasmic segment spans residues 181–292 (RAKKNPGYLS…NSCVGESNHQ (112 aa)). In terms of domain architecture, DHHC spans 249 to 299 (DWCAKCQLVRPARAWHCRICGICVRRMDHHCVWINSCVGESNHQAFILALS). Cys-279 acts as the S-palmitoyl cysteine intermediate in catalysis. A helical membrane pass occupies residues 293–313 (AFILALSIFLLTSVYGISLTL). Topologically, residues 314 to 343 (NTICRDRSLFTALFYCPGVYANYSSALSFT) are lumenal. The helical transmembrane segment at 344 to 364 (CVWYSVIITAGMAYIFLIQLI) threads the bilayer. At 365–425 (NISYNVTERE…TVHTPAEDIV (61 aa)) the chain is on the cytoplasmic side. The interaction with NOS1 stretch occupies residues 422–425 (EDIV).

Belongs to the DHHC palmitoyltransferase family. Interacts with NOS1. As to expression, expressed in the brain.

The protein localises to the golgi apparatus membrane. It is found in the golgi apparatus. It localises to the trans-Golgi network membrane. The enzyme catalyses L-cysteinyl-[protein] + hexadecanoyl-CoA = S-hexadecanoyl-L-cysteinyl-[protein] + CoA. In terms of biological role, palmitoyltransferase that could catalyze the addition of palmitate onto various protein substrates and be involved in a variety of cellular processes. Palmitoyltransferase that mediates palmitoylation of KCNMA1, regulating localization of KCNMA1 to the plasma membrane. May be involved in NOS1 regulation and targeting to the synaptic membrane. This chain is Palmitoyltransferase ZDHHC23, found in Mus musculus (Mouse).